The primary structure comprises 355 residues: Peptide chain release factor 1 (355 aa).

Q233 carries the post-translational modification N5-methylglutamine.

It belongs to the prokaryotic/mitochondrial release factor family. In terms of processing, methylated by PrmC. Methylation increases the termination efficiency of RF1.

It localises to the cytoplasm. Functionally, peptide chain release factor 1 directs the termination of translation in response to the peptide chain termination codons UAG and UAA. The polypeptide is Peptide chain release factor 1 (Bacillus cytotoxicus (strain DSM 22905 / CIP 110041 / 391-98 / NVH 391-98)).